The following is an 814-amino-acid chain: MTTGDCQTLSRRISNPYLEHSPSQIYGENSSCAGRALRNIIILQAADLVKDRVNLKGFYRRSCVGSELVDWLLEHCPFVQCRSMAIGVWQLLLDMGIMSSVDQHLYFQDNYVFYQFSSDECSYLYCEFEREEEWQKGVKLLLELVHLIPARAGICDLSHQKTEDSEESSDEILARLTSAVQRELAAVIALKARKSAIEQDDENADKHVTVTEANNGPDPQAGVMCKLQERDDIGRIELVHKLARENCQFLQTEKKESEKLEQQDDEVTMVQVKEQGQSVLVLKKVASCGPAPTSGSAENDARYVVVSGTPEKILEHLLNDLHLAEVQHKETETLLDDFLLTYTVFMTTDDLCQALLRHYSAKKYQGEEENSDVPCRKRKVLHLVSQWISLYKDWLHEDEHSKMFLKTIYRNVLDDVYEYPILEKELKEFQKILGVYRRHTVDEYSPQKKNKALFHQFSLKENWLQHRGTVAETEEIFCHVYITEHSYISVKAKVSSTAQEILKVVAEKLQRAEEDLALVAITFSGEKHEFQPNDLAISKSLEASGRIYVYRKDLADTLNPLAENEESQQRSMRILGMNTWDLALELMSFDWSLFNSIHEQELIYFTFSRQGNGENTVNLSLLLQRCNEVQLWVATEILLCSQLGKRVQLVKKFIKIAAHCKAQQNLNSFFAIVMGLNTASVSRLSQTWEKIPGKFKKLFSELESLTDPSLNHKAYRDAFKKMKPPKIPFMPLLLKDVTFIHEGNKTFLDNLVNFEKLHMIADTVRTLRHCRTNQFGSDVSPKEQQELKSYVNHLYVIDSQQALFELSHRLEPRA.

Residues 43–118 enclose the DEP domain; the sequence is LQAADLVKDR…DNYVFYQFSS (76 aa). An N-terminal Ras-GEF domain is found at 301–434; that stretch reads ARYVVVSGTP…ELKEFQKILG (134 aa). The region spanning 578 to 813 is the Ras-GEF domain; it reads NTWDLALELM…FELSHRLEPR (236 aa).

It localises to the nucleus. Functionally, guanine nucleotide exchange factor (GEF) for RAP1A, RAP2A and MRAS/M-Ras-GTP. Its association with MRAS inhibits Rap1 activation. In Mus musculus (Mouse), this protein is Rap guanine nucleotide exchange factor 5 (Rapgef5).